The chain runs to 62 residues: Photosystem II reaction center protein Z (62 aa).

2 helical membrane-spanning segments follow: residues 8-28 (AVFA…VVFA) and 41-61 (FSGT…NSLI).

Belongs to the PsbZ family. As to quaternary structure, PSII is composed of 1 copy each of membrane proteins PsbA, PsbB, PsbC, PsbD, PsbE, PsbF, PsbH, PsbI, PsbJ, PsbK, PsbL, PsbM, PsbT, PsbY, PsbZ, Psb30/Ycf12, at least 3 peripheral proteins of the oxygen-evolving complex and a large number of cofactors. It forms dimeric complexes.

The protein resides in the plastid. Its subcellular location is the chloroplast thylakoid membrane. In terms of biological role, may control the interaction of photosystem II (PSII) cores with the light-harvesting antenna, regulates electron flow through the 2 photosystem reaction centers. PSII is a light-driven water plastoquinone oxidoreductase, using light energy to abstract electrons from H(2)O, generating a proton gradient subsequently used for ATP formation. In Pisum sativum (Garden pea), this protein is Photosystem II reaction center protein Z.